The following is a 709-amino-acid chain: Kelch domain-containing protein STK_09390 (709 aa).

Positions 1 to 22 (MKRNTLLALVLVILIFPTLSTA) are cleaved as a signal peptide. 6 Kelch repeats span residues 49 to 94 (KIFL…VCNN), 96 to 140 (LYVV…SYDY), 141 to 192 (KIYV…FNGS), 193 to 240 (ALFV…YYNG), 242 to 288 (MYLV…VQIG), and 290 to 340 (KLII…DTNA). Fibronectin type-III domains follow at residues 315 to 405 (PPPK…VPNP), 406 to 488 (PIIK…ASKA), 489 to 566 (NLTV…IYYI), and 568 to 643 (PASP…NDVR).

The polypeptide is Kelch domain-containing protein STK_09390 (Sulfurisphaera tokodaii (strain DSM 16993 / JCM 10545 / NBRC 100140 / 7) (Sulfolobus tokodaii)).